A 165-amino-acid polypeptide reads, in one-letter code: Phosphopantetheine adenylyltransferase (165 aa).

Thr-10 contributes to the substrate binding site. ATP contacts are provided by residues 10 to 11 (TF) and His-18. Lys-42, Leu-75, and Arg-89 together coordinate substrate. Residues 90–92 (GLR), Glu-100, and 125–131 (YTYVASS) contribute to the ATP site.

Belongs to the bacterial CoaD family. Homohexamer. Requires Mg(2+) as cofactor.

The protein localises to the cytoplasm. The enzyme catalyses (R)-4'-phosphopantetheine + ATP + H(+) = 3'-dephospho-CoA + diphosphate. It functions in the pathway cofactor biosynthesis; coenzyme A biosynthesis; CoA from (R)-pantothenate: step 4/5. Functionally, reversibly transfers an adenylyl group from ATP to 4'-phosphopantetheine, yielding dephospho-CoA (dPCoA) and pyrophosphate. In Chlorobium phaeobacteroides (strain BS1), this protein is Phosphopantetheine adenylyltransferase.